We begin with the raw amino-acid sequence, 503 residues long: Glutamate--tRNA ligase (503 aa).

The 'HIGH' region motif lies at 9–19 (PSPTGDPHVGT). Residues 251-255 (KLSKR) carry the 'KMSKS' region motif. An ATP-binding site is contributed by Lys254.

Belongs to the class-I aminoacyl-tRNA synthetase family. Glutamate--tRNA ligase type 1 subfamily. Monomer.

It is found in the cytoplasm. It catalyses the reaction tRNA(Glu) + L-glutamate + ATP = L-glutamyl-tRNA(Glu) + AMP + diphosphate. Its function is as follows. Catalyzes the attachment of glutamate to tRNA(Glu) in a two-step reaction: glutamate is first activated by ATP to form Glu-AMP and then transferred to the acceptor end of tRNA(Glu). This is Glutamate--tRNA ligase from Saccharophagus degradans (strain 2-40 / ATCC 43961 / DSM 17024).